A 349-amino-acid polypeptide reads, in one-letter code: Peptide transport system ATP-binding protein SapD (349 aa).

Residues 1–259 (MALLDICNLN…PHHPYTQALI (259 aa)) enclose the ABC transporter domain. An ATP-binding site is contributed by 40–47 (GESGSGKS).

The protein belongs to the ABC transporter superfamily.

The protein resides in the cell inner membrane. Involved in a peptide intake transport system that plays a role in the resistance to antimicrobial peptides. The polypeptide is Peptide transport system ATP-binding protein SapD (sapD) (Haemophilus influenzae (strain ATCC 51907 / DSM 11121 / KW20 / Rd)).